Here is a 62-residue protein sequence, read N- to C-terminus: Large ribosomal subunit protein bL32 (62 aa).

The protein belongs to the bacterial ribosomal protein bL32 family.

This Treponema pallidum (strain Nichols) protein is Large ribosomal subunit protein bL32 (rpmF).